An 885-amino-acid polypeptide reads, in one-letter code: Alanine--tRNA ligase (885 aa).

Residues histidine 569, histidine 573, cysteine 672, and histidine 676 each coordinate Zn(2+).

Belongs to the class-II aminoacyl-tRNA synthetase family. The cofactor is Zn(2+).

The protein localises to the cytoplasm. The enzyme catalyses tRNA(Ala) + L-alanine + ATP = L-alanyl-tRNA(Ala) + AMP + diphosphate. In terms of biological role, catalyzes the attachment of alanine to tRNA(Ala) in a two-step reaction: alanine is first activated by ATP to form Ala-AMP and then transferred to the acceptor end of tRNA(Ala). Also edits incorrectly charged Ser-tRNA(Ala) and Gly-tRNA(Ala) via its editing domain. The chain is Alanine--tRNA ligase from Chlorobaculum tepidum (strain ATCC 49652 / DSM 12025 / NBRC 103806 / TLS) (Chlorobium tepidum).